Reading from the N-terminus, the 96-residue chain is MYKDRDVNQRDSRFENQQDGFKKNSNFRFFKRKSCKFCDSGKHPDYKDFDFLKKFITEQGKILPKRITGTSAKHQRRLALEVKRARYMALLPFVKK.

It belongs to the bacterial ribosomal protein bS18 family. In terms of assembly, part of the 30S ribosomal subunit. Forms a tight heterodimer with protein bS6.

Its function is as follows. Binds as a heterodimer with protein bS6 to the central domain of the 16S rRNA, where it helps stabilize the platform of the 30S subunit. The polypeptide is Small ribosomal subunit protein bS18 (Borrelia garinii subsp. bavariensis (strain ATCC BAA-2496 / DSM 23469 / PBi) (Borreliella bavariensis)).